The chain runs to 141 residues: VLSAADKTNVKASWEKLGGHPGAFGGEALDRMFLSFPTTKTYFHHFDLSPGSSNLKTHGKKVADALANAAGHLDDLPGALSTLSDLHAHKLRVDPVNFKLLSHCLLVTLAAHMPADFTPAVHASLDKFLASVSTVLTSKYR.

The region spanning 1–141 (VLSAADKTNV…VSTVLTSKYR (141 aa)) is the Globin domain. The residue at position 3 (Ser3) is a Phosphoserine. Lys7 carries the post-translational modification N6-succinyllysine. Residue Thr8 is modified to Phosphothreonine. At Lys11 the chain carries N6-succinyllysine. Lys16 carries the N6-acetyllysine; alternate modification. Lys16 bears the N6-succinyllysine; alternate mark. Ser35 carries the phosphoserine modification. Position 40 is an N6-succinyllysine (Lys40). Phosphoserine is present on Ser49. His58 serves as a coordination point for O2. A heme b-binding site is contributed by His87. Ser102 is modified (phosphoserine). Phosphothreonine is present on Thr108. Phosphoserine is present on residues Ser124 and Ser131. 2 positions are modified to phosphothreonine: Thr134 and Thr137. A Phosphoserine modification is found at Ser138.

It belongs to the globin family. Heterotetramer of two alpha chains and two beta chains. As to expression, red blood cells.

In terms of biological role, involved in oxygen transport from the lung to the various peripheral tissues. The protein is Hemoglobin subunit alpha of Sciurus carolinensis (Eastern gray squirrel).